The primary structure comprises 262 residues: Electron transfer flavoprotein beta subunit lysine methyltransferase (262 aa).

Residues 1-38 constitute a mitochondrion transit peptide; the sequence is MALSLGWKAHRNHCGLLLQALRSSGLLLFPCGQCPWRG.

Belongs to the methyltransferase superfamily. ETFBKMT family. Interacts with HSPD1; this protein may possibly be a methylation substrate.

It is found in the cytoplasm. The protein localises to the mitochondrion matrix. It catalyses the reaction L-lysyl-[protein] + 3 S-adenosyl-L-methionine = N(6),N(6),N(6)-trimethyl-L-lysyl-[protein] + 3 S-adenosyl-L-homocysteine + 3 H(+). In terms of biological role, protein-lysine methyltransferase that selectively trimethylates the flavoprotein ETFB in mitochondria. Thereby, may negatively regulate the function of ETFB in electron transfer from Acyl-CoA dehydrogenases to the main respiratory chain. This chain is Electron transfer flavoprotein beta subunit lysine methyltransferase, found in Homo sapiens (Human).